Reading from the N-terminus, the 128-residue chain is Small nuclear ribonucleoprotein associated homolog 13 (128 aa).

This sequence belongs to the eukaryotic ribosomal protein eL8 family.

Its subcellular location is the nucleus. The protein localises to the nucleolus. Binds to the 5'-stem-loop of U4 snRNA and may play a role in the late stage of spliceosome assembly. The protein undergoes a conformational change upon RNA-binding. In Caenorhabditis elegans, this protein is Small nuclear ribonucleoprotein associated homolog 13.